The sequence spans 167 residues: Phosphopantetheine adenylyltransferase (167 aa).

Ser10 provides a ligand contact to substrate. ATP is bound by residues 10-11 (SF) and His18. 3 residues coordinate substrate: Lys42, Ala79, and Arg93. Residues 94–96 (GLR), Glu104, and 129–135 (VRHITAT) contribute to the ATP site.

Belongs to the bacterial CoaD family. Homohexamer. It depends on Mg(2+) as a cofactor.

The protein resides in the cytoplasm. It carries out the reaction (R)-4'-phosphopantetheine + ATP + H(+) = 3'-dephospho-CoA + diphosphate. It functions in the pathway cofactor biosynthesis; coenzyme A biosynthesis; CoA from (R)-pantothenate: step 4/5. Reversibly transfers an adenylyl group from ATP to 4'-phosphopantetheine, yielding dephospho-CoA (dPCoA) and pyrophosphate. The chain is Phosphopantetheine adenylyltransferase from Beijerinckia indica subsp. indica (strain ATCC 9039 / DSM 1715 / NCIMB 8712).